Here is a 357-residue protein sequence, read N- to C-terminus: UPF0744 protein C106.03 (357 aa).

Phosphoserine is present on Ser282.

The protein belongs to the UPF0744 family.

It localises to the cytoplasm. The chain is UPF0744 protein C106.03 from Schizosaccharomyces pombe (strain 972 / ATCC 24843) (Fission yeast).